Consider the following 988-residue polypeptide: Transcriptional regulator of yeast form adherence 5 (988 aa).

2 C2H2-type zinc fingers span residues 7-29 and 35-59; these read YICAFCARAFTRSEHKQRHERSH and FHCLHCTSSFVRRDLLQRHCRTVHH. A compositionally biased stretch (polar residues) spans 59–83; the sequence is HTNLNPSTLPSNKSLKNPTTNPLDL. 2 disordered regions span residues 59–129 and 174–229; these read HTNL…SSVG and SMES…SNNN. A compositionally biased stretch (low complexity) spans 84 to 106; that stretch reads SNNEGTTTTTKTGNRKNNSNKNG. Polar residues-rich tracts occupy residues 113 to 129 and 174 to 208; these read TNPNPAVSNDDNRSSVG and SMESDQHSLTTFDSPTSSLGVSMTPSGSTNSEIVL.

The protein localises to the nucleus. Functionally, transcription factor required for yeast cell adherence to silicone substrate. The chain is Transcriptional regulator of yeast form adherence 5 (TRY5) from Candida albicans (strain SC5314 / ATCC MYA-2876) (Yeast).